We begin with the raw amino-acid sequence, 227 residues long: Cytochrome c oxidase subunit 2 (227 aa).

Topologically, residues methionine 1–serine 14 are mitochondrial intermembrane. The chain crosses the membrane as a helical span at residues proline 15–threonine 45. The Mitochondrial matrix portion of the chain corresponds to leucine 46–glutamine 59. Residues glutamate 60 to threonine 87 traverse the membrane as a helical segment. Over aspartate 88 to leucine 227 the chain is Mitochondrial intermembrane. Cu cation contacts are provided by histidine 161, cysteine 196, glutamate 198, cysteine 200, histidine 204, and methionine 207. Glutamate 198 contacts Mg(2+).

The protein belongs to the cytochrome c oxidase subunit 2 family. Component of the cytochrome c oxidase (complex IV, CIV), a multisubunit enzyme composed of 14 subunits. The complex is composed of a catalytic core of 3 subunits MT-CO1, MT-CO2 and MT-CO3, encoded in the mitochondrial DNA, and 11 supernumerary subunits COX4I, COX5A, COX5B, COX6A, COX6B, COX6C, COX7A, COX7B, COX7C, COX8 and NDUFA4, which are encoded in the nuclear genome. The complex exists as a monomer or a dimer and forms supercomplexes (SCs) in the inner mitochondrial membrane with NADH-ubiquinone oxidoreductase (complex I, CI) and ubiquinol-cytochrome c oxidoreductase (cytochrome b-c1 complex, complex III, CIII), resulting in different assemblies (supercomplex SCI(1)III(2)IV(1) and megacomplex MCI(2)III(2)IV(2)). Found in a complex with TMEM177, COA6, COX18, COX20, SCO1 and SCO2. Interacts with TMEM177 in a COX20-dependent manner. Interacts with COX20. Interacts with COX16. Cu cation is required as a cofactor.

It localises to the mitochondrion inner membrane. It carries out the reaction 4 Fe(II)-[cytochrome c] + O2 + 8 H(+)(in) = 4 Fe(III)-[cytochrome c] + 2 H2O + 4 H(+)(out). In terms of biological role, component of the cytochrome c oxidase, the last enzyme in the mitochondrial electron transport chain which drives oxidative phosphorylation. The respiratory chain contains 3 multisubunit complexes succinate dehydrogenase (complex II, CII), ubiquinol-cytochrome c oxidoreductase (cytochrome b-c1 complex, complex III, CIII) and cytochrome c oxidase (complex IV, CIV), that cooperate to transfer electrons derived from NADH and succinate to molecular oxygen, creating an electrochemical gradient over the inner membrane that drives transmembrane transport and the ATP synthase. Cytochrome c oxidase is the component of the respiratory chain that catalyzes the reduction of oxygen to water. Electrons originating from reduced cytochrome c in the intermembrane space (IMS) are transferred via the dinuclear copper A center (CU(A)) of subunit 2 and heme A of subunit 1 to the active site in subunit 1, a binuclear center (BNC) formed by heme A3 and copper B (CU(B)). The BNC reduces molecular oxygen to 2 water molecules using 4 electrons from cytochrome c in the IMS and 4 protons from the mitochondrial matrix. The chain is Cytochrome c oxidase subunit 2 (MT-CO2) from Gorilla gorilla beringei (Mountain gorilla).